A 231-amino-acid chain; its full sequence is Trypsin-2 (231 aa).

A signal peptide spans 1-4 (AAFA). A propeptide spans 5-9 (TEDDK) (activation peptide). One can recognise a Peptidase S1 domain in the interval 10-229 (IVGGYECKAY…FNDWLTSTMA (220 aa)). Cystine bridges form between Cys16/Cys145, Cys34/Cys50, Cys118/Cys218, Cys125/Cys191, Cys156/Cys170, and Cys181/Cys205. Residue His49 is the Charge relay system of the active site. Ca(2+) is bound by residues Glu61, Asn63, Val66, and Glu71. Asp93 (charge relay system) is an active-site residue. Ser185 (charge relay system) is an active-site residue.

Belongs to the peptidase S1 family. The cofactor is Ca(2+).

The protein resides in the secreted. The protein localises to the extracellular space. The catalysed reaction is Preferential cleavage: Arg-|-Xaa, Lys-|-Xaa.. This is Trypsin-2 from Salmo salar (Atlantic salmon).